The sequence spans 497 residues: Signal recognition particle receptor FtsY (497 aa).

2 disordered regions span residues 1 to 63 and 79 to 130; these read MAKE…TEAE and AESE…EWQA. Residues 87 to 96 are compositionally biased toward low complexity; the sequence is EAEVVAQPEP. Residues 300–307, 382–386, and 446–449 contribute to the GTP site; these read GVNGVGKT, DTAGR, and TKLD.

This sequence belongs to the GTP-binding SRP family. FtsY subfamily. Part of the signal recognition particle protein translocation system, which is composed of SRP and FtsY. SRP is a ribonucleoprotein composed of Ffh and a 4.5S RNA molecule. Binds to SecY. In terms of processing, proteolytically cleaved. The cleavage may regulate function and subcellular location of FtsY. Full-length FtsY is found primarily associated with the membrane, while cleaved protein is predominantly present in the cytoplasm.

The protein localises to the cell inner membrane. It is found in the cytoplasm. It carries out the reaction GTP + H2O = GDP + phosphate + H(+). Its activity is regulated as follows. Conformation of the Ffh-FtsY complex and regulation of its GTPase activity are modulated by the 4.5S RNA. Formation of the FfH-FtsY complex leads to a mutual stimulation of both GTPases. Involved in targeting and insertion of nascent membrane proteins into the cytoplasmic membrane. Acts as a receptor for the complex formed by the signal recognition particle (SRP) and the ribosome-nascent chain (RNC). Interaction with SRP-RNC leads to the transfer of the RNC complex to the Sec translocase for insertion into the membrane, the hydrolysis of GTP by both Ffh and FtsY, and the dissociation of the SRP-FtsY complex into the individual components. The chain is Signal recognition particle receptor FtsY from Escherichia coli (strain K12).